Consider the following 250-residue polypeptide: 5-oxoprolinase subunit A (250 aa).

Belongs to the LamB/PxpA family. In terms of assembly, forms a complex composed of PxpA, PxpB and PxpC.

The enzyme catalyses 5-oxo-L-proline + ATP + 2 H2O = L-glutamate + ADP + phosphate + H(+). Catalyzes the cleavage of 5-oxoproline to form L-glutamate coupled to the hydrolysis of ATP to ADP and inorganic phosphate. This Staphylococcus haemolyticus (strain JCSC1435) protein is 5-oxoprolinase subunit A.